A 111-amino-acid polypeptide reads, in one-letter code: Holo-[acyl-carrier-protein] synthase (111 aa).

Positions 8 and 57 each coordinate Mg(2+).

Belongs to the P-Pant transferase superfamily. AcpS family. Mg(2+) serves as cofactor.

The protein localises to the cytoplasm. The catalysed reaction is apo-[ACP] + CoA = holo-[ACP] + adenosine 3',5'-bisphosphate + H(+). In terms of biological role, transfers the 4'-phosphopantetheine moiety from coenzyme A to a Ser of acyl-carrier-protein. The chain is Holo-[acyl-carrier-protein] synthase from Mycoplasmoides gallisepticum (strain R(low / passage 15 / clone 2)) (Mycoplasma gallisepticum).